The sequence spans 120 residues: C-C motif chemokine 23 (120 aa).

A signal peptide spans 1 to 21; the sequence is MKVSVAALSCLMLVTALGSQA. Cystine bridges form between C54–C78, C55–C94, and C65–C105.

It belongs to the intercrine beta (chemokine CC) family.

It is found in the secreted. Functionally, shows chemotactic activity for monocytes, resting T-lymphocytes, and neutrophils, but not for activated lymphocytes. Inhibits proliferation of myeloid progenitor cells in colony formation assays. This protein can bind heparin. Binds CCR1. The protein is C-C motif chemokine 23 (CCL23) of Macaca mulatta (Rhesus macaque).